A 394-amino-acid chain; its full sequence is Envelope glycoprotein D (394 aa).

Residues 1–25 (MGGAAARLGAVILFVVIVGLHGVRG) form the signal peptide. The interaction with TNFRSF14 stretch occupies residues 25–57 (GKYALADASLKMADPNRFRGKDLPVPDRLTDPP). The Virion surface segment spans residues 26 to 339 (KYALADASLK…PYHPPATPNN (314 aa)). His-64 contacts Zn(2+). 3 disulfide bridges follow: Cys-91/Cys-214, Cys-131/Cys-227, and Cys-143/Cys-152. N-linked (GlcNAc...) asparagine; by host glycosylation is found at Asn-119 and Asn-146. Asp-240 provides a ligand contact to Zn(2+). The tract at residues 261–305 (LKIAGWHGPKAPYTSTLLPPELSETPNATQPELAPEDPEDSALLE) is profusion. A disordered region spans residues 275–301 (STLLPPELSETPNATQPELAPEDPEDS). Asn-287 carries N-linked (GlcNAc...) asparagine; by host glycosylation. Residues 340–364 (MGLIAGAVGGSLLAALVICGIVYWM) form a helical membrane-spanning segment. The Intravirion portion of the chain corresponds to 365-394 (RRRTQKGPKRIRLPHIREDDQPSSHQPLFY). Residues 374-394 (RIRLPHIREDDQPSSHQPLFY) form a disordered region.

This sequence belongs to the herpesviridae glycoprotein D family. As to quaternary structure, homodimer. Interacts with host receptor TNFRSF14. Interacts with host receptor NECTIN1. Interacts (via profusion domain) with gB; this interaction occurs in the absence of gH/gL. Interacts (via profusion domain) with gH/gL heterodimer; this interaction occurs in the absence of gB. Associates with the gB-gH/gL-gD complex. Interacts (via C-terminus) with UL11 tegument protein. Interacts with host RSAD2.

It localises to the virion membrane. Its subcellular location is the host Golgi apparatus. In terms of biological role, envelope glycoprotein that binds to the host cell entry receptors NECTIN1, TNFRSF14/HVEM and 3-O-sulfated heparan sulfate, promoting the virus entry into host cells. May trigger fusion with host membrane, by recruiting the fusion machinery composed of gB and gH/gL. The sequence is that of Envelope glycoprotein D (gD) from Homo sapiens (Human).